The sequence spans 484 residues: Glycogen synthase (484 aa).

Lysine 15 is a binding site for ADP-alpha-D-glucose.

This sequence belongs to the glycosyltransferase 1 family. Bacterial/plant glycogen synthase subfamily.

It carries out the reaction [(1-&gt;4)-alpha-D-glucosyl](n) + ADP-alpha-D-glucose = [(1-&gt;4)-alpha-D-glucosyl](n+1) + ADP + H(+). It participates in glycan biosynthesis; glycogen biosynthesis. Functionally, synthesizes alpha-1,4-glucan chains using ADP-glucose. The polypeptide is Glycogen synthase (Geotalea uraniireducens (strain Rf4) (Geobacter uraniireducens)).